A 301-amino-acid chain; its full sequence is MPIIIDKDLPARKVLQEENIFTMTKERAEKQDIRALKIAILNLMPKKQETEAQLLRLLGNTPLQLDMHLLHMESHISRNVAQDHLTSFYKTFRDIEKERFDGLIITGAPIETLPFEDVDYWEELKKIMDYSKTNVTSTLHICWGAQAGLYYHYGIPKYPLAEKMFGVFEHEVLEQHVKLLQGFDELFFAPHSRHTEVHAADIEKVEDLKLLAISEEAGVYLVIGQNGKHIFVLGHSEYSCDTLKREYERDIQRGLNIAVPKNYFKYNNPDEKPLVRWRSHGNLLFSNWLNYYVYQETPYIL.

C142 (acyl-thioester intermediate) is an active-site residue. K163 and S192 together coordinate substrate. Residue H235 is the Proton acceptor of the active site. E237 is a catalytic residue. R249 serves as a coordination point for substrate.

Belongs to the MetA family.

It is found in the cytoplasm. It catalyses the reaction L-homoserine + acetyl-CoA = O-acetyl-L-homoserine + CoA. It participates in amino-acid biosynthesis; L-methionine biosynthesis via de novo pathway; O-acetyl-L-homoserine from L-homoserine: step 1/1. Transfers an acetyl group from acetyl-CoA to L-homoserine, forming acetyl-L-homoserine. This chain is Homoserine O-acetyltransferase, found in Bacillus cytotoxicus (strain DSM 22905 / CIP 110041 / 391-98 / NVH 391-98).